The primary structure comprises 24 residues: Coenzyme PQQ synthesis protein A (24 aa).

The pyrroloquinoline quinone (Glu-Tyr) cross-link spans 16-20 (EITMY).

It belongs to the PqqA family.

It participates in cofactor biosynthesis; pyrroloquinoline quinone biosynthesis. Functionally, required for coenzyme pyrroloquinoline quinone (PQQ) biosynthesis. PQQ is probably formed by cross-linking a specific glutamate to a specific tyrosine residue and excising these residues from the peptide. The polypeptide is Coenzyme PQQ synthesis protein A (Variovorax paradoxus (strain S110)).